The following is a 208-amino-acid chain: Protein-L-isoaspartate O-methyltransferase (208 aa).

The active site involves S59.

It belongs to the methyltransferase superfamily. L-isoaspartyl/D-aspartyl protein methyltransferase family. In terms of assembly, monomer.

The protein resides in the cytoplasm. It catalyses the reaction [protein]-L-isoaspartate + S-adenosyl-L-methionine = [protein]-L-isoaspartate alpha-methyl ester + S-adenosyl-L-homocysteine. Functionally, catalyzes the methyl esterification of L-isoaspartyl residues in peptides and proteins that result from spontaneous decomposition of normal L-aspartyl and L-asparaginyl residues. It plays a role in the repair and/or degradation of damaged proteins. This chain is Protein-L-isoaspartate O-methyltransferase (pcm), found in Shigella flexneri.